Reading from the N-terminus, the 114-residue chain is Putative movement protein (114 aa).

A helical membrane pass occupies residues 27-47 (LIGIILLVTVCLTVLWVCIML). Residues 79–114 (RTPFEATGPERERNWEARRQSTTVNPASQPNTGSVF) are disordered. Positions 86–97 (GPERERNWEARR) are enriched in basic and acidic residues. The span at 98-114 (QSTTVNPASQPNTGSVF) shows a compositional bias: polar residues.

This sequence belongs to the nanovirus movement protein family.

The protein localises to the host cell membrane. In terms of biological role, may transport viral genome to neighboring plant cells directly through plasmosdesmata, without any budding. The movement protein allows efficient cell to cell propagation, by bypassing the host cell wall barrier. This Faba bean necrotic yellows virus (isolate Egyptian EV1-93) (FBNYV) protein is Putative movement protein (DNA-M).